We begin with the raw amino-acid sequence, 357 residues long: UDP-N-acetylglucosamine--N-acetylmuramyl-(pentapeptide) pyrophosphoryl-undecaprenol N-acetylglucosamine transferase (357 aa).

UDP-N-acetyl-alpha-D-glucosamine contacts are provided by residues 13–15, Asn122, Arg163, Ser191, and Gln288; that span reads TGG.

This sequence belongs to the glycosyltransferase 28 family. MurG subfamily.

It localises to the cell inner membrane. The catalysed reaction is di-trans,octa-cis-undecaprenyl diphospho-N-acetyl-alpha-D-muramoyl-L-alanyl-D-glutamyl-meso-2,6-diaminopimeloyl-D-alanyl-D-alanine + UDP-N-acetyl-alpha-D-glucosamine = di-trans,octa-cis-undecaprenyl diphospho-[N-acetyl-alpha-D-glucosaminyl-(1-&gt;4)]-N-acetyl-alpha-D-muramoyl-L-alanyl-D-glutamyl-meso-2,6-diaminopimeloyl-D-alanyl-D-alanine + UDP + H(+). The protein operates within cell wall biogenesis; peptidoglycan biosynthesis. In terms of biological role, cell wall formation. Catalyzes the transfer of a GlcNAc subunit on undecaprenyl-pyrophosphoryl-MurNAc-pentapeptide (lipid intermediate I) to form undecaprenyl-pyrophosphoryl-MurNAc-(pentapeptide)GlcNAc (lipid intermediate II). In Gloeobacter violaceus (strain ATCC 29082 / PCC 7421), this protein is UDP-N-acetylglucosamine--N-acetylmuramyl-(pentapeptide) pyrophosphoryl-undecaprenol N-acetylglucosamine transferase.